The sequence spans 129 residues: MARKAKKKNISSGVAHIHSSNQNTIITFTDEKGNVIAWSSSGKVGFKGTKKKTSFAASEAAKDAAQMAKEHGISQVRVEMKGLGSGKDSARKQIEVWGIKVTEIKDVTPIPHNGTRPPKRVLKRLRLKK.

A disordered region spans residues 108–129; sequence TPIPHNGTRPPKRVLKRLRLKK. The span at 117-129 shows a compositional bias: basic residues; it reads PPKRVLKRLRLKK.

The protein belongs to the universal ribosomal protein uS11 family. In terms of assembly, part of the 30S ribosomal subunit. Interacts with proteins S7 and S18. Binds to IF-3.

Located on the platform of the 30S subunit, it bridges several disparate RNA helices of the 16S rRNA. Forms part of the Shine-Dalgarno cleft in the 70S ribosome. The protein is Small ribosomal subunit protein uS11 of Mycoplasmopsis synoviae (strain 53) (Mycoplasma synoviae).